The primary structure comprises 235 residues: 2-C-methyl-D-erythritol 4-phosphate cytidylyltransferase (235 aa).

Belongs to the IspD/TarI cytidylyltransferase family. IspD subfamily.

The enzyme catalyses 2-C-methyl-D-erythritol 4-phosphate + CTP + H(+) = 4-CDP-2-C-methyl-D-erythritol + diphosphate. It functions in the pathway isoprenoid biosynthesis; isopentenyl diphosphate biosynthesis via DXP pathway; isopentenyl diphosphate from 1-deoxy-D-xylulose 5-phosphate: step 2/6. Functionally, catalyzes the formation of 4-diphosphocytidyl-2-C-methyl-D-erythritol from CTP and 2-C-methyl-D-erythritol 4-phosphate (MEP). This Pseudomonas fluorescens (strain Pf0-1) protein is 2-C-methyl-D-erythritol 4-phosphate cytidylyltransferase.